Reading from the N-terminus, the 403-residue chain is Stearoyl-[acyl-carrier-protein] 9-desaturase 4, chloroplastic (403 aa).

The N-terminal 44 residues, 1–44 (MALLLNSTMTVAMKQNPATAVSFMQTTCLGSSFSPPRHLQVSCV), are a transit peptide targeting the chloroplast. The Fe cation site is built by E140, E178, H181, E231, E264, and H267.

The protein belongs to the fatty acid desaturase type 2 family. In terms of assembly, homodimer. The cofactor is Fe(2+). Preferentially expressed in roots.

The protein resides in the plastid. It is found in the chloroplast. The catalysed reaction is octadecanoyl-[ACP] + 2 reduced [2Fe-2S]-[ferredoxin] + O2 + 2 H(+) = (9Z)-octadecenoyl-[ACP] + 2 oxidized [2Fe-2S]-[ferredoxin] + 2 H2O. It participates in lipid metabolism; fatty acid metabolism. Converts stearoyl-ACP to oleoyl-ACP by introduction of a cis double bond between carbons 9 and 10 of the acyl chain. The protein is Stearoyl-[acyl-carrier-protein] 9-desaturase 4, chloroplastic (S-ACP-DES4) of Arabidopsis thaliana (Mouse-ear cress).